The following is a 357-amino-acid chain: Protein RecA (357 aa).

Position 71–78 (Gly-71–Thr-78) interacts with ATP.

It belongs to the RecA family.

It is found in the cytoplasm. Functionally, can catalyze the hydrolysis of ATP in the presence of single-stranded DNA, the ATP-dependent uptake of single-stranded DNA by duplex DNA, and the ATP-dependent hybridization of homologous single-stranded DNAs. It interacts with LexA causing its activation and leading to its autocatalytic cleavage. This chain is Protein RecA, found in Ehrlichia ruminantium (strain Gardel).